The following is a 115-amino-acid chain: U3-lycotoxin-Ls1i (115 aa).

The N-terminal stretch at 1 to 20 is a signal peptide; that stretch reads MKFVLLFGVFLVTLFSYSSA. Residues 21–44 constitute a propeptide that is removed on maturation; sequence EMLDDFDQADEDELLSLIEKEEAR. 4 disulfide bridges follow: C48-C63, C55-C72, C62-C87, and C74-C85.

This sequence belongs to the neurotoxin 19 (CSTX) family. 01 subfamily. Expressed by the venom gland.

Its subcellular location is the secreted. This is U3-lycotoxin-Ls1i from Lycosa singoriensis (Wolf spider).